The primary structure comprises 158 residues: Snaclec stejaggregin-A subunit alpha (158 aa).

An N-terminal signal peptide occupies residues 1 to 23; the sequence is MGRFISVSFGLLVVFLSLSGTGA. Disulfide bonds link Cys27–Cys38, Cys55–Cys152, and Cys127–Cys144. A C-type lectin domain is found at 34-153; sequence YDWYCYKPFN…CQAKNPFVCK (120 aa).

This sequence belongs to the snaclec family. As to quaternary structure, heteromultimer; disulfide-linked. In terms of tissue distribution, expressed by the venom gland.

It localises to the secreted. Interferes with one step of hemostasis (modulation of platelet aggregation, or coagulation cascade, for example). The chain is Snaclec stejaggregin-A subunit alpha from Trimeresurus stejnegeri (Chinese green tree viper).